A 78-amino-acid chain; its full sequence is Alpha-neurotoxin homolog 7 (78 aa).

A signal peptide spans 1-21; sequence MKTLLLTLVVVTIVCLDFGYT. Intrachain disulfides connect cysteine 24/cysteine 42, cysteine 37/cysteine 57, cysteine 59/cysteine 70, and cysteine 71/cysteine 76.

The protein belongs to the three-finger toxin family. Short-chain subfamily. Orphan group XII sub-subfamily. As to expression, expressed by the venom gland.

The protein localises to the secreted. This Micrurus corallinus (Brazilian coral snake) protein is Alpha-neurotoxin homolog 7.